Reading from the N-terminus, the 257-residue chain is Deoxyribose-phosphate aldolase (257 aa).

Residue aspartate 102 is the Proton donor/acceptor of the active site. Lysine 166 serves as the catalytic Schiff-base intermediate with acetaldehyde. The active-site Proton donor/acceptor is the lysine 198.

This sequence belongs to the DeoC/FbaB aldolase family. DeoC type 2 subfamily.

It is found in the cytoplasm. It catalyses the reaction 2-deoxy-D-ribose 5-phosphate = D-glyceraldehyde 3-phosphate + acetaldehyde. It functions in the pathway carbohydrate degradation; 2-deoxy-D-ribose 1-phosphate degradation; D-glyceraldehyde 3-phosphate and acetaldehyde from 2-deoxy-alpha-D-ribose 1-phosphate: step 2/2. Its function is as follows. Catalyzes a reversible aldol reaction between acetaldehyde and D-glyceraldehyde 3-phosphate to generate 2-deoxy-D-ribose 5-phosphate. The polypeptide is Deoxyribose-phosphate aldolase (Aeromonas hydrophila subsp. hydrophila (strain ATCC 7966 / DSM 30187 / BCRC 13018 / CCUG 14551 / JCM 1027 / KCTC 2358 / NCIMB 9240 / NCTC 8049)).